The primary structure comprises 584 residues: Putative poly(A) polymerase catalytic subunit (584 aa).

The span at 522 to 531 shows a compositional bias: basic and acidic residues; the sequence is EAEISEKEET. The interval 522-584 is disordered; the sequence is EAEISEKEET…ENSLDSLTSD (63 aa). A compositionally biased stretch (low complexity) spans 546–569; sequence SPNSSPNSSPNNSLNNSIDISTNN.

The protein belongs to the poxviridae poly(A) polymerase catalytic subunit family. Highly divergent.

It is found in the virion. It carries out the reaction RNA(n) + ATP = RNA(n)-3'-adenine ribonucleotide + diphosphate. In terms of biological role, polymerase that creates the 3'-poly(A) tail of mRNA's. The polypeptide is Putative poly(A) polymerase catalytic subunit (Acanthamoeba polyphaga (Amoeba)).